Consider the following 571-residue polypeptide: Decapping 5-like protein (571 aa).

The segment covering 1–17 (MASESSQSSSPSSSQPP) has biased composition (low complexity). Disordered regions lie at residues 1–27 (MASE…SPGN), 102–141 (LQVN…ISGY), 159–187 (LSSK…GSLT), and 258–305 (SQVV…SEAQ). The region spanning 25–108 (PGNNVGDTFI…IKDLQVNPSP (84 aa)) is the Sm domain. Polar residues-rich tracts occupy residues 104 to 138 (VNPS…SSPI) and 167 to 187 (TQHS…GSLT). Low complexity predominate over residues 264–279 (SPDVSSNQSYSSNPSP). The span at 293–305 (SVSSNLSPPSEAQ) shows a compositional bias: polar residues. The 37-residue stretch at 419-455 (RIPSSSIEYTEEFDFEAMNEKFKKSELWGYLGRNNQR) folds into the DFDF domain. Residues 474 to 489 (PAYNKDDFFDTISCNQ) carry the FFD box motif. The TFG box motif lies at 498–518 (QQHNQFPEHMRQVPEAFGNNF).

This sequence belongs to the LSM14 family. In terms of assembly, homodimer. Component of the decapping complex.

The protein localises to the cytoplasm. It is found in the P-body. In terms of biological role, as a component of the decapping complex, involved in the degradation of mRNAs. Promotes P-body formation. Translational repressor. The polypeptide is Decapping 5-like protein (DCP5-L) (Arabidopsis thaliana (Mouse-ear cress)).